Reading from the N-terminus, the 4241-residue chain is Intermembrane lipid transfer protein vps13E (4241 aa).

The Chorein N-terminal domain occupies 5 to 97 (ILPGLLKKIL…GPKDIINTFS (93 aa)). Low complexity predominate over residues 120 to 140 (IDSNSNNNNKKNAPSSSSSND). Disordered regions lie at residues 120-143 (IDSN…DDFF), 234-340 (LSKN…QQQQ), 942-986 (LGTG…VEKE), 1220-1256 (NNNN…NQKP), 1345-1369 (TTTT…QNRH), 1534-1571 (KPSS…YNNN), 2148-2192 (QQQQ…PNVH), and 2217-2282 (VTEK…NNIN). A compositionally biased stretch (polar residues) spans 234–254 (LSKNTSTHQQQQPTFNPYVGS). A compositionally biased stretch (low complexity) spans 255–264 (QQQQQQQPQQ). Residues 279 to 289 (FMNNKNSDEGI) show a composition bias toward polar residues. 3 stretches are compositionally biased toward low complexity: residues 290-313 (SSSS…LNDN), 325-340 (QPTP…QQQQ), and 942-952 (LGTGNGINNNN). Positions 968–986 (DDGKYPEQDDLDDSKVEKE) are enriched in basic and acidic residues. Positions 1220-1253 (NNNNNNNNNNNNNNNNNNNNNRNLNNNNNNNNNN) are enriched in low complexity. Residues 1352 to 1369 (RYHHQNHHNHQHKKQNRH) are compositionally biased toward basic residues. 3 stretches are compositionally biased toward low complexity: residues 1538 to 1551 (KDNN…NNSD), 1559 to 1571 (DSSS…YNNN), and 2148 to 2177 (QQQQ…NNNN). Polar residues predominate over residues 2178-2188 (VSGNTINNKSV). Over residues 2246-2259 (SDDDDDEGEDEDIG) the composition is skewed to acidic residues. A compositionally biased stretch (polar residues) spans 2265–2282 (DHSTSSAPTSRSNYNNIN). In terms of domain architecture, SHR-BD spans 2825-3134 (KIVFYNQYWI…IPYVWDLPLE (310 aa)). Disordered stretches follow at residues 3973 to 4000 (PTTT…YPTE), 4059 to 4094 (YQHS…RQLQ), and 4109 to 4140 (KSMA…SGSG). The segment covering 3974–3984 (TTTTTTNTTTT) has biased composition (low complexity). Polar residues predominate over residues 3985-4000 (PYQSSQNIHSTPYPTE). Positions 4128–4140 (SNNRLSLTPSGSG) are enriched in polar residues.

This sequence belongs to the VPS13 family.

The protein localises to the membrane. Its function is as follows. Mediates the transfer of lipids between membranes at organelle contact sites. This is Intermembrane lipid transfer protein vps13E (vps13E) from Dictyostelium discoideum (Social amoeba).